Consider the following 210-residue polypeptide: Somatotropin (210 aa).

An N-terminal signal peptide occupies residues 1-23 (MARALVLLSVVLVSLLVNQGTAS). H38 provides a ligand contact to Zn(2+). Cysteines 71 and 183 form a disulfide. E192 lines the Zn(2+) pocket. A disulfide bridge connects residues C200 and C208.

It belongs to the somatotropin/prolactin family.

It localises to the secreted. In terms of biological role, growth hormone plays an important role in growth control. This chain is Somatotropin (gh), found in Ctenopharyngodon idella (Grass carp).